Here is a 119-residue protein sequence, read N- to C-terminus: uncharacterized protein (119 aa).

Residues L55 to N119 form a disordered region. Positions L81 to T92 are enriched in polar residues.

This is an uncharacterized protein from Saccharomyces cerevisiae (strain ATCC 204508 / S288c) (Baker's yeast).